A 283-amino-acid polypeptide reads, in one-letter code: Elongation factor Ts (283 aa).

The interval 79–82 (TDFV) is involved in Mg(2+) ion dislocation from EF-Tu.

Belongs to the EF-Ts family.

Its subcellular location is the cytoplasm. Its function is as follows. Associates with the EF-Tu.GDP complex and induces the exchange of GDP to GTP. It remains bound to the aminoacyl-tRNA.EF-Tu.GTP complex up to the GTP hydrolysis stage on the ribosome. The protein is Elongation factor Ts of Shewanella frigidimarina (strain NCIMB 400).